We begin with the raw amino-acid sequence, 209 residues long: Uracil phosphoribosyltransferase (209 aa).

Residues Arg79, Arg104, and 131-139 contribute to the 5-phospho-alpha-D-ribose 1-diphosphate site; that span reads DPMLATGGS. Residues Ile194 and 199-201 each bind uracil; that span reads GDA. Position 200 (Asp200) interacts with 5-phospho-alpha-D-ribose 1-diphosphate.

The protein belongs to the UPRTase family. Mg(2+) serves as cofactor.

The catalysed reaction is UMP + diphosphate = 5-phospho-alpha-D-ribose 1-diphosphate + uracil. The protein operates within pyrimidine metabolism; UMP biosynthesis via salvage pathway; UMP from uracil: step 1/1. Allosterically activated by GTP. Catalyzes the conversion of uracil and 5-phospho-alpha-D-ribose 1-diphosphate (PRPP) to UMP and diphosphate. This Desulfitobacterium hafniense (strain DSM 10664 / DCB-2) protein is Uracil phosphoribosyltransferase.